The sequence spans 407 residues: MIGFEIFLAIGMFTAIVLGLVAIILVARAKLVSSGDVTIQINGEHSLTVPAGGKLLQTLAANNVFLSSACGGGGTCAQCKCVVVEGGGEMLPTEESHFTRRQAKEGWRLSCQTPVKQDMQIRVPEEVFGVKKWECTVESNPNVATFIKELTLRLPDGESVDFRAGGYVQLECPPHVVEYKDFDIQPEYRGDWDKFNMWRYVSKVDETVIRAYSMANYPEEKGVVKFNIRIASPPPGSDLPPGQMSSWVFNLKPGDKVTVYGPFGEFFAKDTEAEMVFIGGGAGMAPMRSHIFDQLRRLKSNRKISFWYGARSLREAFYTEEYDQLQAENPNFQWHLALSDPQPEDNWTGLTGFIHNVLFENYLKDHPAPEDCEFYMCGPPMMNAAVIKMLTDLGVERENILLDDFGG.

Residues 6–26 (IFLAIGMFTAIVLGLVAIILV) form a helical membrane-spanning segment. The 2Fe-2S ferredoxin-type domain occupies 35–127 (GDVTIQINGE…DMQIRVPEEV (93 aa)). The [2Fe-2S] cluster site is built by cysteine 70, cysteine 76, cysteine 79, and cysteine 111. Residues 130-269 (VKKWECTVES…YGPFGEFFAK (140 aa)) form the FAD-binding FR-type domain. The catalytic stretch occupies residues 272 to 389 (EAEMVFIGGG…PMMNAAVIKM (118 aa)).

Belongs to the NqrF family. In terms of assembly, composed of six subunits; NqrA, NqrB, NqrC, NqrD, NqrE and NqrF. [2Fe-2S] cluster is required as a cofactor. It depends on FAD as a cofactor.

The protein localises to the cell inner membrane. It catalyses the reaction a ubiquinone + n Na(+)(in) + NADH + H(+) = a ubiquinol + n Na(+)(out) + NAD(+). NQR complex catalyzes the reduction of ubiquinone-1 to ubiquinol by two successive reactions, coupled with the transport of Na(+) ions from the cytoplasm to the periplasm. The first step is catalyzed by NqrF, which accepts electrons from NADH and reduces ubiquinone-1 to ubisemiquinone by a one-electron transfer pathway. This chain is Na(+)-translocating NADH-quinone reductase subunit F, found in Pseudomonas aeruginosa (strain ATCC 15692 / DSM 22644 / CIP 104116 / JCM 14847 / LMG 12228 / 1C / PRS 101 / PAO1).